We begin with the raw amino-acid sequence, 166 residues long: Regulator of ribonuclease activity A (166 aa).

The protein belongs to the RraA family. In terms of assembly, homotrimer. Binds to both RNA-binding sites in the C-terminal region of Rne and to RhlB.

The protein resides in the cytoplasm. In terms of biological role, globally modulates RNA abundance by binding to RNase E (Rne) and regulating its endonucleolytic activity. Can modulate Rne action in a substrate-dependent manner by altering the composition of the degradosome. Modulates RNA-binding and helicase activities of the degradosome. The protein is Regulator of ribonuclease activity A of Mannheimia succiniciproducens (strain KCTC 0769BP / MBEL55E).